A 581-amino-acid chain; its full sequence is Tetratricopeptide repeat and J domain-containing co-chaperone DNJ1 (581 aa).

Positions 1-19 are cleaved as a signal peptide; it reads MKATLLPSLLALSLTLCLA. 7 TPR repeats span residues 48–81, 82–115, 116–149, 221–254, 257–293, 378–411, and 412–445; these read ASQH…DPSS, WLTY…NPKF, DKAY…RAEK, LETR…TPSP, LRRL…DPDN, LELH…DPDN, and VEAT…SGRT. N-linked (GlcNAc...) asparagine glycosylation is present at N293. The 62-residue stretch at 467-528 folds into the J domain; it reads DYYKVLGVKR…ELRKKYDQGD (62 aa). Residues 522–544 form a disordered region; sequence KKYDQGDDPNDPMGGQQGGYGNP.

Interacts with the ER chaperone BIP1.

Its subcellular location is the endoplasmic reticulum lumen. Endoplasmic reticulum (ER) protein that functions as a co-chaperone for BIP1 during ER stress. Might be specifically involved in the refolding of N-glycosylated proteins. This chain is Tetratricopeptide repeat and J domain-containing co-chaperone DNJ1, found in Mycosarcoma maydis (Corn smut fungus).